The sequence spans 529 residues: uncharacterized protein (529 aa).

ATP is bound by residues T178–K186, D401, R416, and K510.

Belongs to the ATP-dependent AMP-binding enzyme family.

This is an uncharacterized protein from Bacillus subtilis (strain 168).